Reading from the N-terminus, the 461-residue chain is tRNA modification GTPase MnmE (461 aa).

Residues K32, E89, and K128 each coordinate (6S)-5-formyl-5,6,7,8-tetrahydrofolate. Positions G224 to P387 constitute a TrmE-type G domain. N234 is a binding site for K(+). Residues N234 to S239, S253 to T259, and D278 to G281 contribute to the GTP site. S238 provides a ligand contact to Mg(2+). 3 residues coordinate K(+): S253, I255, and T258. T259 provides a ligand contact to Mg(2+). K461 lines the (6S)-5-formyl-5,6,7,8-tetrahydrofolate pocket.

Belongs to the TRAFAC class TrmE-Era-EngA-EngB-Septin-like GTPase superfamily. TrmE GTPase family. As to quaternary structure, homodimer. Heterotetramer of two MnmE and two MnmG subunits. Requires K(+) as cofactor.

It is found in the cytoplasm. Its function is as follows. Exhibits a very high intrinsic GTPase hydrolysis rate. Involved in the addition of a carboxymethylaminomethyl (cmnm) group at the wobble position (U34) of certain tRNAs, forming tRNA-cmnm(5)s(2)U34. This Helicobacter pylori (strain HPAG1) protein is tRNA modification GTPase MnmE.